The sequence spans 332 residues: Phosphoenolpyruvate transferase (332 aa).

Aspartate 63 serves as a coordination point for 7,8-didemethyl-8-hydroxy-5-deazariboflavin.

It belongs to the CofD family. Homodimer. Mg(2+) is required as a cofactor.

The catalysed reaction is enolpyruvoyl-2-diphospho-5'-guanosine + 7,8-didemethyl-8-hydroxy-5-deazariboflavin = dehydro coenzyme F420-0 + GMP + H(+). It functions in the pathway cofactor biosynthesis; coenzyme F420 biosynthesis. In terms of biological role, catalyzes the transfer of the phosphoenolpyruvate moiety from enoylpyruvoyl-2-diphospho-5'-guanosine (EPPG) to 7,8-didemethyl-8-hydroxy-5-deazariboflavin (FO) with the formation of dehydro coenzyme F420-0 and GMP. The polypeptide is Phosphoenolpyruvate transferase (Nocardia farcinica (strain IFM 10152)).